The chain runs to 641 residues: Choline O-acetyltransferase (641 aa).

Position 17 is a phosphoserine (Ser17). Catalysis depends on His335, which acts as the Proton acceptor. Ser366 carries the phosphoserine modification. CoA is bound by residues 413–425 (GKTF…CSPD), Ser451, and Gln552. The disordered stretch occupies residues 615–641 (CSSRQPADSKPPTAKERARGPSQAKQS).

It belongs to the carnitine/choline acetyltransferase family.

It carries out the reaction choline + acetyl-CoA = acetylcholine + CoA. Catalyzes the reversible synthesis of acetylcholine (ACh) from acetyl CoA and choline at cholinergic synapses. The sequence is that of Choline O-acetyltransferase (Chat) from Mus musculus (Mouse).